Here is a 376-residue protein sequence, read N- to C-terminus: ATP synthase gamma chain, chloroplastic (376 aa).

A chloroplast-targeting transit peptide spans 1 to 52; that stretch reads MSCSNVTMLVSSKPSLPDASNLSFRSAFNPFQLPSQNSSSSCTPSRPTSIQC. Cys133 is a catalytic residue. Cys250 and Cys256 are oxidised to a cystine.

This sequence belongs to the ATPase gamma chain family. In terms of assembly, F-type ATPases have 2 components, CF(1) - the catalytic core - and CF(0) - the membrane proton channel. CF(1) has five subunits: alpha(3), beta(3), gamma(1), delta(1), epsilon(1). CF(0) has four main subunits: a, b, b' and c.

It is found in the plastid. The protein resides in the chloroplast thylakoid membrane. Functionally, produces ATP from ADP in the presence of a proton gradient across the membrane. The gamma chain is believed to be important in regulating ATPase activity and the flow of protons through the CF(0) complex. In Pisum sativum (Garden pea), this protein is ATP synthase gamma chain, chloroplastic (ATPC).